A 180-amino-acid polypeptide reads, in one-letter code: MENRLKAKYENEVRPSLIEKFDYSSVMAAPKLEKIVLNMGVGDATQNSKNLDEAVEELGLISGQKPLITKAKKSIAGFRLREGMAIGAKVTLRGTRMYDFLDKLVNVSLPRVRDFRGVSNKAFDGRGNYTLGVREQLIFPEIDYDNVNRVRGLDIVIVTTANSDEEAHELLAQLGMPFAK.

This sequence belongs to the universal ribosomal protein uL5 family. In terms of assembly, part of the 50S ribosomal subunit; part of the 5S rRNA/L5/L18/L25 subcomplex. Contacts the 5S rRNA and the P site tRNA. Forms a bridge to the 30S subunit in the 70S ribosome.

Its function is as follows. This is one of the proteins that bind and probably mediate the attachment of the 5S RNA into the large ribosomal subunit, where it forms part of the central protuberance. In the 70S ribosome it contacts protein S13 of the 30S subunit (bridge B1b), connecting the 2 subunits; this bridge is implicated in subunit movement. Contacts the P site tRNA; the 5S rRNA and some of its associated proteins might help stabilize positioning of ribosome-bound tRNAs. The polypeptide is Large ribosomal subunit protein uL5 (Limosilactobacillus fermentum (strain NBRC 3956 / LMG 18251) (Lactobacillus fermentum)).